The chain runs to 511 residues: Bifunctional purine biosynthesis protein PurH (511 aa).

Positions 1–145 constitute an MGS-like domain; sequence MKKRALVSVS…KNHQFVSVIV (145 aa).

It belongs to the PurH family.

The catalysed reaction is (6R)-10-formyltetrahydrofolate + 5-amino-1-(5-phospho-beta-D-ribosyl)imidazole-4-carboxamide = 5-formamido-1-(5-phospho-D-ribosyl)imidazole-4-carboxamide + (6S)-5,6,7,8-tetrahydrofolate. It carries out the reaction IMP + H2O = 5-formamido-1-(5-phospho-D-ribosyl)imidazole-4-carboxamide. It functions in the pathway purine metabolism; IMP biosynthesis via de novo pathway; 5-formamido-1-(5-phospho-D-ribosyl)imidazole-4-carboxamide from 5-amino-1-(5-phospho-D-ribosyl)imidazole-4-carboxamide (10-formyl THF route): step 1/1. Its pathway is purine metabolism; IMP biosynthesis via de novo pathway; IMP from 5-formamido-1-(5-phospho-D-ribosyl)imidazole-4-carboxamide: step 1/1. The chain is Bifunctional purine biosynthesis protein PurH from Bacillus cereus (strain G9842).